Consider the following 628-residue polypeptide: MNAPDKFTSLLSLTREPFPASHKCLIPGSRPDLNVPVRDVLLTNGETVSLYDTSGPYTDAKVEIDVRRGLPGVRGAWITERNDTESYEGRSHQALDEGLKHAHDHDAQRLAELRAGASALQRTPRRAKAGANVTQMHYARRGIVTPEMEYVALRENGKREWMAEYLANEERAKRVAGNPMGASIPRIITPEFVRDEVARGRAIIPANINHPEVEPMAIGRNFKVKINANIGNSAVTSSIEEEVEKLVWAIRWGADNVMDLSTGKNIHTTRDWIVRNSPVPIGTVPIYQALEKVGGVAEDLTWEIFRDTLIEQAEQGIDYFTIHAGVRLPFIHLTADRMTGIVSRGGSIMAKWCIAHHKESFLYERFEDICDIMKAYDVSFSLGDGLRPGSGADANDEAQFAELRTLGELTQIAWKHDVQTMIEGPGHVPMHMIQANMDEQLKHCHEAPFYTLGPLTIDIAPGYDHISSAIGAAMIGWAGTAMLCYVTPKEHLGLPDRDDVKQGIIAYKIAAHAADVAKGHPGARSRDDALSKARFEFRWQDQFNLGLDPDTAREFHDETLPKDSSKVAHFCSMCGPKFCSMKITQEVREYAAKKGVAEAEAMAEGMAQKSREFMAGGGEIYIPIQPAS.

Substrate-binding positions include Asn229, Met258, Tyr287, His323, 343 to 345, 384 to 387, and Glu423; these read SRG and DGLR. Residue His427 participates in Zn(2+) binding. Tyr450 provides a ligand contact to substrate. Zn(2+) is bound at residue His491. Residues Cys571, Cys574, and Cys579 each coordinate [4Fe-4S] cluster.

The protein belongs to the ThiC family. As to quaternary structure, homodimer. The cofactor is [4Fe-4S] cluster.

It carries out the reaction 5-amino-1-(5-phospho-beta-D-ribosyl)imidazole + S-adenosyl-L-methionine = 4-amino-2-methyl-5-(phosphooxymethyl)pyrimidine + CO + 5'-deoxyadenosine + formate + L-methionine + 3 H(+). It functions in the pathway cofactor biosynthesis; thiamine diphosphate biosynthesis. Functionally, catalyzes the synthesis of the hydroxymethylpyrimidine phosphate (HMP-P) moiety of thiamine from aminoimidazole ribotide (AIR) in a radical S-adenosyl-L-methionine (SAM)-dependent reaction. The sequence is that of Phosphomethylpyrimidine synthase from Variovorax paradoxus (strain S110).